A 251-amino-acid polypeptide reads, in one-letter code: Chorismate mutase (251 aa).

Residues 1-251 form the Chorismate mutase domain; the sequence is MSLVNEKLKL…EVDYLLARLL (251 aa). 5 residues coordinate L-tyrosine: Arg74, Arg75, Asn134, Gly136, and Ser137. Positions 134, 136, and 137 each coordinate L-tryptophan.

In terms of assembly, homodimer.

It localises to the cytoplasm. The enzyme catalyses chorismate = prephenate. The protein operates within metabolic intermediate biosynthesis; prephenate biosynthesis; prephenate from chorismate: step 1/1. Each dimer has two allosteric binding sites that can bind the regulatory effectors tryptophan or tyrosine. Can bind either one tryptophan or one tyrosine, two tryptophan or two tyrosine or one tryptophan and one tyrosine, which differentially affect the catalytic activity. Activated by tryptophan and subject to feedback inhibition by tyrosine. In the presence of both tryptophan and tyrosine, the enzyme is in the activated state. In terms of biological role, catalyzes the Claisen rearrangement of chorismate to prephenate. Acts at the first branch point in the aromatic amino acid pathway where it steers biosynthesis towards phenylalanine and tyrosine, and away from tryptophan. The sequence is that of Chorismate mutase from Schizosaccharomyces pombe (strain 972 / ATCC 24843) (Fission yeast).